A 436-amino-acid chain; its full sequence is Methylenetetrahydrofolate--tRNA-(uracil-5-)-methyltransferase TrmFO (436 aa).

11-16 provides a ligand contact to FAD; sequence GAGLAG.

The protein belongs to the MnmG family. TrmFO subfamily. It depends on FAD as a cofactor.

It is found in the cytoplasm. The catalysed reaction is uridine(54) in tRNA + (6R)-5,10-methylene-5,6,7,8-tetrahydrofolate + NADH + H(+) = 5-methyluridine(54) in tRNA + (6S)-5,6,7,8-tetrahydrofolate + NAD(+). It carries out the reaction uridine(54) in tRNA + (6R)-5,10-methylene-5,6,7,8-tetrahydrofolate + NADPH + H(+) = 5-methyluridine(54) in tRNA + (6S)-5,6,7,8-tetrahydrofolate + NADP(+). Functionally, catalyzes the folate-dependent formation of 5-methyl-uridine at position 54 (M-5-U54) in all tRNAs. The protein is Methylenetetrahydrofolate--tRNA-(uracil-5-)-methyltransferase TrmFO of Shouchella clausii (strain KSM-K16) (Alkalihalobacillus clausii).